The chain runs to 1227 residues: Tyrosine-protein kinase receptor ver-3 (1227 aa).

An N-terminal signal peptide occupies residues 1–17 (MKLKLTVLLILVHASAS). At 18-764 (YKPPAIEVED…VQVNNAPKGS (747 aa)) the chain is on the extracellular side. The 91-residue stretch at 20-110 (PPAIEVEDYQ…RESDTGTYSC (91 aa)) folds into the Ig-like C2-type 1 domain. The cysteines at positions 52 and 110 are disulfide-linked. 7 N-linked (GlcNAc...) asparagine glycosylation sites follow: Asn-119, Asn-211, Asn-245, Asn-255, Asn-381, Asn-425, and Asn-528. The 126-residue stretch at 200–325 (VNFECRYKKE…EHENKETKYT (126 aa)) folds into the Ig-like C2-type 2 domain. Cys-204 and Cys-313 are joined by a disulfide. Ig-like C2-type domains are found at residues 565-666 (PHHE…TSID) and 673-758 (PSIT…VQVN). Cystine bridges form between Cys-592/Cys-650 and Cys-696/Cys-740. The N-linked (GlcNAc...) asparagine glycan is linked to Asn-697. Residues 765–785 (LFFYWFLALLLLISIIAVFLL) form a helical membrane-spanning segment. At 786–1227 (TCKLRASNRL…ERYLIVESHA (442 aa)) the chain is on the cytoplasmic side. Residues 847–1175 (LEILNPIGSG…HMRDSSSQFL (329 aa)) form the Protein kinase domain. Residues 853–861 (IGSGHFGVV) and Lys-886 contribute to the ATP site. Catalysis depends on Asp-1030, which acts as the Proton acceptor. Residues 1194 to 1227 (DWIQDSRPDVPNVSFQKSPKKQKEERYLIVESHA) are disordered. The segment covering 1214-1227 (KQKEERYLIVESHA) has biased composition (basic and acidic residues).

The protein belongs to the protein kinase superfamily. Tyr protein kinase family. In terms of tissue distribution, expressed in the ALA neuron.

The protein resides in the cell membrane. It carries out the reaction L-tyrosyl-[protein] + ATP = O-phospho-L-tyrosyl-[protein] + ADP + H(+). Its function is as follows. Receptor tyrosine kinase which may be involved, downstream of pvf-1, in the positioning of ray 1, the most anterior ray sensillum in the male tail. This is Tyrosine-protein kinase receptor ver-3 from Caenorhabditis elegans.